The chain runs to 359 residues: Mandelate racemase (359 aa).

Residue lysine 166 is the Proton acceptor; specific for S-mandelate of the active site. The Mg(2+) site is built by aspartate 195, glutamate 221, and glutamate 247. Catalysis depends on histidine 297, which acts as the Proton acceptor; specific for R-mandelate. Glutamate 317 contacts substrate.

Belongs to the mandelate racemase/muconate lactonizing enzyme family. In terms of assembly, homooctamer. Mg(2+) is required as a cofactor.

The enzyme catalyses (S)-mandelate = (R)-mandelate. The protein operates within aromatic compound metabolism; (R)-mandelate degradation; benzoate from (R)-mandelate: step 1/4. The chain is Mandelate racemase (mdlA) from Pseudomonas putida (Arthrobacter siderocapsulatus).